The primary structure comprises 478 residues: MKLKAKYKQQSKVGKVVQVVSAVVDVSFAGKDLPHILNALECTINNEKIVLEVVQHIGDDIVRCLAMNSTDGLFRGAEVIDTGEQIKVPVGKSILGRILNVVGQPIDDLGPIKCDNFSQIHKDAPKFINQSTSRKILITGIKVIDLLTPYISGGKIGLFGGAGVGKTVLIMEIINNVAKAYKGYTVFTGVGERTREGGDLYKEMVGSNIIDLNKLENSKVTLVFGQMNEPPGARARVALTGLTIAESFRDMNEGEVLLFIDNIFRFTQAGAEISTLLGRIPSAVGYQPTLATDIGSLQERITSTKFGAITSIQAIYVPADDLTDPAPVACFAHLDATTVLSRKIAELGIYPAVDPLNSSSQILDANVIGQEHYSVATKVQEILQTYKSLQDVIAILGVDELSDDEKRIVSRARKIQRFLTQPFHVAEVFTGKQGRFVSLEDTIYGFKGLIEGKYDDLPEMAFYMVGSIDEAIEKSKTL.

160–167 (GGAGVGKT) is an ATP binding site.

Belongs to the ATPase alpha/beta chains family. In terms of assembly, F-type ATPases have 2 components, CF(1) - the catalytic core - and CF(0) - the membrane proton channel. CF(1) has five subunits: alpha(3), beta(3), gamma(1), delta(1), epsilon(1). CF(0) has three main subunits: a(1), b(2) and c(9-12). The alpha and beta chains form an alternating ring which encloses part of the gamma chain. CF(1) is attached to CF(0) by a central stalk formed by the gamma and epsilon chains, while a peripheral stalk is formed by the delta and b chains.

It is found in the cell inner membrane. It carries out the reaction ATP + H2O + 4 H(+)(in) = ADP + phosphate + 5 H(+)(out). Functionally, produces ATP from ADP in the presence of a proton gradient across the membrane. The catalytic sites are hosted primarily by the beta subunits. The chain is ATP synthase subunit beta from Orientia tsutsugamushi (strain Ikeda) (Rickettsia tsutsugamushi).